Here is a 152-residue protein sequence, read N- to C-terminus: Transcriptional regulator MraZ (152 aa).

SpoVT-AbrB domains lie at 5–52 (ATLV…PLPE) and 81–124 (ASEC…DEQT).

The protein belongs to the MraZ family. In terms of assembly, forms oligomers.

It is found in the cytoplasm. The protein resides in the nucleoid. In terms of biological role, negatively regulates its own expression and that of the subsequent genes in the proximal part of the division and cell wall (dcw) gene cluster. Acts by binding directly to DNA. May also regulate the expression of genes outside the dcw cluster. This chain is Transcriptional regulator MraZ, found in Pectobacterium atrosepticum (strain SCRI 1043 / ATCC BAA-672) (Erwinia carotovora subsp. atroseptica).